A 109-amino-acid polypeptide reads, in one-letter code: Aquaporin-2 (109 aa).

Over 1–6 (SIAFSR) the chain is Cytoplasmic. A helical transmembrane segment spans residues 7-27 (AVFAEFLATLIFVFFGLGSAL). At 28-35 (NWQQSLPS) the chain is on the extracellular side. The helical transmembrane segment at 36-54 (VLQIAMAFGLAIGTLVQAL) threads the bilayer. At 55 to 59 (GHISG) the chain is on the cytoplasmic side. An intramembrane region (discontinuously helical) is located at residues 60 to 69 (AHINPAVTVA). Positions 63 to 65 (NPA) match the NPA 1 motif. Residues 70 to 80 (CLVGCHVSFLR) lie on the Cytoplasmic side of the membrane. A helical transmembrane segment spans residues 81 to 102 (AAFYVAAQLLGAVAGAALLHEV). The Extracellular segment spans residues 103-109 (TPSDVRG).

It belongs to the MIP/aquaporin (TC 1.A.8) family. In terms of assembly, homotetramer. In terms of processing, serine phosphorylation is necessary and sufficient for expression at the apical membrane. Endocytosis is not phosphorylation-dependent. N-glycosylated.

It is found in the apical cell membrane. It localises to the basolateral cell membrane. Its subcellular location is the cell membrane. The protein localises to the cytoplasmic vesicle membrane. The protein resides in the golgi apparatus. It is found in the trans-Golgi network membrane. It catalyses the reaction H2O(in) = H2O(out). The catalysed reaction is glycerol(in) = glycerol(out). Forms a water-specific channel that provides the plasma membranes of renal collecting duct with high permeability to water, thereby permitting water to move in the direction of an osmotic gradient. Plays an essential role in renal water homeostasis. Could also be permeable to glycerol. This is Aquaporin-2 from Talpa europaea (European mole).